A 408-amino-acid polypeptide reads, in one-letter code: 8-amino-7-oxononanoate synthase (408 aa).

Arginine 20 serves as a coordination point for substrate. 117–118 provides a ligand contact to pyridoxal 5'-phosphate; it reads GY. Substrate is bound at residue histidine 142. The pyridoxal 5'-phosphate site is built by serine 188, histidine 216, and threonine 244. Lysine 247 carries the N6-(pyridoxal phosphate)lysine modification. Threonine 367 provides a ligand contact to substrate.

The protein belongs to the class-II pyridoxal-phosphate-dependent aminotransferase family. BioF subfamily. In terms of assembly, homodimer. It depends on pyridoxal 5'-phosphate as a cofactor.

The enzyme catalyses 6-carboxyhexanoyl-[ACP] + L-alanine + H(+) = (8S)-8-amino-7-oxononanoate + holo-[ACP] + CO2. Its pathway is cofactor biosynthesis; biotin biosynthesis. Functionally, catalyzes the decarboxylative condensation of pimeloyl-[acyl-carrier protein] and L-alanine to produce 8-amino-7-oxononanoate (AON), [acyl-carrier protein], and carbon dioxide. This chain is 8-amino-7-oxononanoate synthase, found in Cupriavidus pinatubonensis (strain JMP 134 / LMG 1197) (Cupriavidus necator (strain JMP 134)).